A 406-amino-acid polypeptide reads, in one-letter code: 3-oxoacyl-[acyl-carrier-protein] synthase 1 (406 aa).

Residues 1–405 enclose the Ketosynthase family 3 (KS3) domain; that stretch reads MRRVVITGIG…GTNVSLIVKK (405 aa). Catalysis depends on for beta-ketoacyl synthase activity residues C164, H299, and H335.

The protein belongs to the thiolase-like superfamily. Beta-ketoacyl-ACP synthases family. As to quaternary structure, homodimer.

The protein resides in the cytoplasm. It carries out the reaction a fatty acyl-[ACP] + malonyl-[ACP] + H(+) = a 3-oxoacyl-[ACP] + holo-[ACP] + CO2. It catalyses the reaction (3Z)-decenoyl-[ACP] + malonyl-[ACP] + H(+) = 3-oxo-(5Z)-dodecenoyl-[ACP] + holo-[ACP] + CO2. It functions in the pathway lipid metabolism; fatty acid biosynthesis. Its function is as follows. Involved in the type II fatty acid elongation cycle. Catalyzes the elongation of a wide range of acyl-ACP by the addition of two carbons from malonyl-ACP to an acyl acceptor. Can also use unsaturated fatty acids. Catalyzes a key reaction in unsaturated fatty acid (UFA) synthesis, the elongation of the cis-3-decenoyl-ACP produced by FabA. In Buchnera aphidicola subsp. Acyrthosiphon pisum (strain APS) (Acyrthosiphon pisum symbiotic bacterium), this protein is 3-oxoacyl-[acyl-carrier-protein] synthase 1 (fabB).